The following is a 289-amino-acid chain: ATP phosphoribosyltransferase (289 aa).

The protein belongs to the ATP phosphoribosyltransferase family. Long subfamily. Requires Mg(2+) as cofactor.

It localises to the cytoplasm. It catalyses the reaction 1-(5-phospho-beta-D-ribosyl)-ATP + diphosphate = 5-phospho-alpha-D-ribose 1-diphosphate + ATP. The protein operates within amino-acid biosynthesis; L-histidine biosynthesis; L-histidine from 5-phospho-alpha-D-ribose 1-diphosphate: step 1/9. Feedback inhibited by histidine. In terms of biological role, catalyzes the condensation of ATP and 5-phosphoribose 1-diphosphate to form N'-(5'-phosphoribosyl)-ATP (PR-ATP). Has a crucial role in the pathway because the rate of histidine biosynthesis seems to be controlled primarily by regulation of HisG enzymatic activity. The sequence is that of ATP phosphoribosyltransferase from Methanosarcina mazei (strain ATCC BAA-159 / DSM 3647 / Goe1 / Go1 / JCM 11833 / OCM 88) (Methanosarcina frisia).